Consider the following 319-residue polypeptide: Cytochrome c biogenesis protein CcsA (319 aa).

The next 8 membrane-spanning stretches (helical) occupy residues 11–31, 34–54, 71–91, 97–117, 142–162, 227–247, 254–274, and 288–308; these read VNFA…SLAF, ISGL…ALAL, LYES…FIES, LIGA…SLAL, IMMI…LFLI, IIGL…VWAN, WSWD…AAYL, and AILA…VNFL.

The protein belongs to the CcmF/CycK/Ccl1/NrfE/CcsA family. May interact with Ccs1.

The protein localises to the plastid. It localises to the chloroplast thylakoid membrane. Its function is as follows. Required during biogenesis of c-type cytochromes (cytochrome c6 and cytochrome f) at the step of heme attachment. In Porphyra purpurea (Red seaweed), this protein is Cytochrome c biogenesis protein CcsA.